Here is a 341-residue protein sequence, read N- to C-terminus: Gibberellin 2-beta-dioxygenase 5 (341 aa).

One can recognise a Fe2OG dioxygenase domain in the interval 187–290; it reads REETCFLRLN…RFSMAFFLCP (104 aa). Tyr-198 is a binding site for 2-oxoglutarate. Residues His-213, Asp-215, and His-271 each coordinate Fe cation. 2-oxoglutarate contacts are provided by Arg-281 and Ser-283.

Belongs to the iron/ascorbate-dependent oxidoreductase family. GA2OX subfamily. Requires L-ascorbate as cofactor. It depends on Fe(2+) as a cofactor. In terms of tissue distribution, expressed in roots, leaves, culms, leaf sheaths and young panicles.

It is found in the cytoplasm. Its subcellular location is the nucleus. The catalysed reaction is gibberellin A1 + 2-oxoglutarate + O2 = gibberellin A8 + succinate + CO2. Its pathway is plant hormone biosynthesis; gibberellin biosynthesis. Its function is as follows. Catalyzes the 2-beta-hydroxylation of several biologically active gibberellins (GAs), leading to the homeostatic regulation of their endogenous level. Catabolism of GAs plays a central role in plant development. In vitro, converts GA12 and GA53 to the corresponding 2-beta-hydroxylated products GA110 and GA97, respectively. The protein is Gibberellin 2-beta-dioxygenase 5 of Oryza sativa subsp. japonica (Rice).